A 989-amino-acid chain; its full sequence is Mediator of RNA polymerase II transcription subunit 24 (989 aa).

Short sequence motifs (LXXLL motif) lie at residues 343-347 (LTPLL), 359-363 (LSLLL), 447-451 (LDLLL), 556-560 (LVALL), 787-791 (LPRLL), and 857-861 (LMRLL).

This sequence belongs to the Mediator complex subunit 24 family. Component of the Mediator complex.

The protein localises to the nucleus. Component of the Mediator complex, a coactivator involved in the regulated transcription of nearly all RNA polymerase II-dependent genes. Mediator functions as a bridge to convey information from gene-specific regulatory proteins to the basal RNA polymerase II transcription machinery. Mediator is recruited to promoters by direct interactions with regulatory proteins and serves as a scaffold for the assembly of a functional preinitiation complex with RNA polymerase II and the general transcription factors. Required for proliferation of enteric nervous system precursors. Required for the development of dopaminergic amacrine cells and rod photoreceptor cells in the retina. The protein is Mediator of RNA polymerase II transcription subunit 24 (med24) of Danio rerio (Zebrafish).